The following is an 873-amino-acid chain: Bifunctional uridylyltransferase/uridylyl-removing enzyme (873 aa).

The interval 1-332 (MPYQCPITFN…NGGQTQEAEI (332 aa)) is uridylyltransferase. The interval 333–692 (LDNDFQRRGS…ISKKATRGGT (360 aa)) is uridylyl-removing. One can recognise an HD domain in the interval 451-573 (VDEHSIRLLK…VRDEESLELL (123 aa)). ACT domains are found at residues 693–777 (EVFV…RTPR) and 800–873 (LMEL…ELAP).

The protein belongs to the GlnD family. Mg(2+) is required as a cofactor.

The enzyme catalyses [protein-PII]-L-tyrosine + UTP = [protein-PII]-uridylyl-L-tyrosine + diphosphate. The catalysed reaction is [protein-PII]-uridylyl-L-tyrosine + H2O = [protein-PII]-L-tyrosine + UMP + H(+). Uridylyltransferase (UTase) activity is inhibited by glutamine, while glutamine activates uridylyl-removing (UR) activity. In terms of biological role, modifies, by uridylylation and deuridylylation, the PII regulatory proteins (GlnB and homologs), in response to the nitrogen status of the cell that GlnD senses through the glutamine level. Under low glutamine levels, catalyzes the conversion of the PII proteins and UTP to PII-UMP and PPi, while under higher glutamine levels, GlnD hydrolyzes PII-UMP to PII and UMP (deuridylylation). Thus, controls uridylylation state and activity of the PII proteins, and plays an important role in the regulation of nitrogen assimilation and metabolism. This Vibrio atlanticus (strain LGP32) (Vibrio splendidus (strain Mel32)) protein is Bifunctional uridylyltransferase/uridylyl-removing enzyme.